A 589-amino-acid polypeptide reads, in one-letter code: Capsid scaffolding protein (589 aa).

Residues His47, Ser118, and His142 each act as charge relay system in the active site. Residues Glu264–Gln273 are compositionally biased toward basic and acidic residues. Residues Glu264 to His283 form a disordered region. Residues His307–Pro326 form an interaction with pAP region. Disordered regions lie at residues Arg421 to Tyr478 and Ala514 to Gly552. 2 short sequence motifs (nuclear localization signal) span residues Lys428–Arg433 and Lys453–Lys459. Basic residues predominate over residues Lys453–His462. Residues Ala514–Ser543 show a composition bias toward low complexity. Residues Pro569 to Glu589 are interaction with major capsid protein.

This sequence belongs to the herpesviridae capsid scaffolding protein family. In terms of assembly, homomultimer. Interacts with major capsid protein. As to quaternary structure, exists in a monomer-dimer equilibrium with the dimer being the active species. In terms of processing, capsid scaffolding protein is cleaved by assemblin after formation of the spherical procapsid. As a result, the capsid obtains its mature, icosahedral shape. Cleavages occur at two or more sites: release (R-site) and maturation (M-site).

The protein resides in the host cytoplasm. It is found in the host nucleus. The enzyme catalyses Cleaves -Ala-|-Ser- and -Ala-|-Ala- bonds in the scaffold protein.. In terms of biological role, acts as a scaffold protein by binding major capsid protein in the cytoplasm, inducing the nuclear localization of both proteins. Multimerizes in the nucleus such as major capsid protein forms the icosahedral T=16 capsid. Autocatalytic cleavage releases the assembly protein, and subsequently abolishes interaction with major capsid protein. Cleavages products are evicted from the capsid before or during DNA packaging. Functionally, protease that plays an essential role in virion assembly within the nucleus. Catalyzes the cleavage of the assembly protein after formation of the spherical procapsid. By that cleavage, the capsid matures and gains its icosahedral shape. The cleavage sites seem to include -Ala-Ser-, -Ala-Ala-, as well as Ala-Thr bonds. Assemblin and cleavages products are evicted from the capsid before or during DNA packaging. Plays a major role in capsid assembly. Acts as a scaffold protein by binding major capsid protein. Multimerizes in the nucleus such as major capsid protein forms the icosahedral T=16 capsid. Cleaved by assemblin after capsid completion. The cleavages products are evicted from the capsid before or during DNA packaging. This Simian cytomegalovirus (strain Colburn) protein is Capsid scaffolding protein (UL80).